Reading from the N-terminus, the 435-residue chain is Transcription factor tau 55 kDa subunit (435 aa).

Residues 362-417 (GLLSPTEENETTNAGQSKGSSTANDPNIQIQEEDVGLPDSTNTSRDHTGDKEEVQS) are disordered. Serine 365 carries the phosphoserine modification. Positions 372–391 (TTNAGQSKGSSTANDPNIQI) are enriched in polar residues. The segment covering 405–417 (SRDHTGDKEEVQS) has biased composition (basic and acidic residues).

As to quaternary structure, component of the TFIIIC complex composed of TFC1, TFC3, TFC4, TFC6, TFC7 and TFC8. The subunits are organized in two globular domains, tauA and tauB, connected by a proteolysis-sensitive and flexible linker.

The protein resides in the nucleus. In terms of biological role, TFIIIC mediates tRNA and 5S RNA gene activation by binding to intragenic promoter elements. Upstream of the transcription start site, TFIIIC assembles the initiation complex TFIIIB-TFIIIC-tDNA, which is sufficient for RNA polymerase III recruitment and function. Part of the tauA domain of TFIIIC that binds boxA DNA promoter sites of tRNA and similar genes. This is Transcription factor tau 55 kDa subunit (TFC7) from Saccharomyces cerevisiae (strain ATCC 204508 / S288c) (Baker's yeast).